A 370-amino-acid chain; its full sequence is mRNA cap guanine-N(7) methyltransferase 1 (370 aa).

Positions 1–11 (MKRGFSDSPSS) are enriched in low complexity. A disordered region spans residues 1–34 (MKRGFSDSPSSSAPPPSSRFKSNPEGDSQFLEDE). The mRNA cap 0 methyltransferase domain maps to 61–341 (SPIIHLKKLN…LYLSFVLRKR (281 aa)). Residue 70–71 (NN) coordinates mRNA. S-adenosyl-L-methionine is bound by residues Lys74, Ala92, Asp114, 150 to 151 (DC), and 172 to 174 (QFA).

Belongs to the class I-like SAM-binding methyltransferase superfamily. mRNA cap 0 methyltransferase family.

The protein resides in the nucleus. It carries out the reaction a 5'-end (5'-triphosphoguanosine)-ribonucleoside in mRNA + S-adenosyl-L-methionine = a 5'-end (N(7)-methyl 5'-triphosphoguanosine)-ribonucleoside in mRNA + S-adenosyl-L-homocysteine. In terms of biological role, mRNA-capping methyltransferase that methylates the N7 position of the added guanosine to the 5'-cap structure of mRNAs. Binds RNA containing 5'-terminal GpppC. The protein is mRNA cap guanine-N(7) methyltransferase 1 of Arabidopsis thaliana (Mouse-ear cress).